We begin with the raw amino-acid sequence, 169 residues long: Ribosome maturation factor RimM (169 aa).

The PRC barrel domain maps to 95-168 (EGNYYIFQIV…KMKVELLEGL (74 aa)).

It belongs to the RimM family. In terms of assembly, binds ribosomal protein uS19.

The protein localises to the cytoplasm. Functionally, an accessory protein needed during the final step in the assembly of 30S ribosomal subunit, possibly for assembly of the head region. Essential for efficient processing of 16S rRNA. May be needed both before and after RbfA during the maturation of 16S rRNA. It has affinity for free ribosomal 30S subunits but not for 70S ribosomes. The protein is Ribosome maturation factor RimM of Desulforamulus reducens (strain ATCC BAA-1160 / DSM 100696 / MI-1) (Desulfotomaculum reducens).